The following is a 968-amino-acid chain: Probable histidine kinase 1 (968 aa).

Coiled-coil stretches lie at residues 89–120 (LLKE…FQDE) and 169–204 (KERA…QSHT). In terms of domain architecture, Histidine kinase spans 372 to 655 (TMSHEIRSPL…TFSFVLPCKI (284 aa)). Histidine 375 carries the phosphohistidine; by autocatalysis modification. The interval 737–757 (STNSASTAHQSNGPSVSRTNK) is disordered. The segment covering 738 to 754 (TNSASTAHQSNGPSVSR) has biased composition (polar residues). Positions 818 to 965 (KILLVEDNKV…NIKECLQQYL (148 aa)) constitute a Response regulatory domain. Residue aspartate 867 is modified to 4-aspartylphosphate.

In terms of processing, activation probably requires a transfer of a phosphate group between a His in the transmitter domain and an Asp of the receiver domain.

The catalysed reaction is ATP + protein L-histidine = ADP + protein N-phospho-L-histidine.. In terms of biological role, cytokinin receptor related to bacterial two-component regulators. Functions as a histidine kinase and transmits the stress signal to a downstream MAPK cascade. The protein is Probable histidine kinase 1 of Oryza sativa subsp. indica (Rice).